The sequence spans 396 residues: Odorant receptor 49a (396 aa).

The Cytoplasmic portion of the chain corresponds to 1–6; that stretch reads MEKLRS. A helical transmembrane segment spans residues 7–27; sequence YEDFIFMANMMFKTLGYDLFH. Topologically, residues 28 to 34 are extracellular; sequence TPKPWWR. Residues 35-55 form a helical membrane-spanning segment; the sequence is YLLVRGYFVLCTISNFYEASM. At 56–70 the chain is on the cytoplasmic side; that stretch reads VTTRIIEWESLAGSP. A helical membrane pass occupies residues 71–91; sequence SKIMRQGLHFFYMLSSQLKFI. The Extracellular portion of the chain corresponds to 92–141; the sequence is TFMINRKRLLQLSHRLKELYPHKEQNQRKYEVNKYYLSCSTRNVLYVYYF. The chain crosses the membrane as a helical span at residues 142 to 162; it reads VMVVMALEPLVQSCIMYLIGF. Residues 163-209 lie on the Cytoplasmic side of the membrane; sequence GKADFTYKRIFPTRLTFDSEKPLGYVLAYVIDFTYSQFIVNVSLGTD. Residues 210 to 230 form a helical membrane-spanning segment; it reads LWMMCVSSQISMHLGYLANML. At 231–266 the chain is on the extracellular side; that stretch reads ASIRPSPETEQQDCDFLASIIKRHQLMIRLQKDVNY. A helical membrane pass occupies residues 267 to 287; that stretch reads VFGLLLASNLFTTSCLLCCMA. Residues 288-296 are Cytoplasmic-facing; it reads YYTVVEGFN. The helical transmembrane segment at 297-317 threads the bilayer; that stretch reads WEGISYMMLFASVAAQFYVVS. The Extracellular segment spans residues 318–396; sequence SHGQMLIDLS…FAVIRQTVEK (79 aa).

Belongs to the insect chemoreceptor superfamily. Heteromeric odorant receptor channel (TC 1.A.69) family. Or49a subfamily. In terms of assembly, interacts with Orco. Complexes exist early in the endomembrane system in olfactory sensory neurons (OSNs), coupling these complexes to the conserved ciliary trafficking pathway.

The protein resides in the cell membrane. Odorant receptor which mediates acceptance or avoidance behavior, depending on its substrates. The odorant receptor repertoire encodes a large collection of odor stimuli that vary widely in identity, intensity, and duration. May form a complex with Orco to form odorant-sensing units, providing sensitive and prolonged odorant signaling and calcium permeability. Involved in the behavioral responses to butanol and 2-heptanone. The sequence is that of Odorant receptor 49a (Or49a) from Drosophila melanogaster (Fruit fly).